Reading from the N-terminus, the 164-residue chain is MGEMGKAMGLLISGTLVYYHCAYRNATLLSLFSDVFIVLLCSLAILGLLFRQLNVSVPVDPLEWQISQDTASNIVARLANTVGAAEGVLRVAATGHDKRLFVKVVICLYFLSALGRLISGVTVAYAGLCLFCLSMLCQTSQSLGNCVLKRGNGQILEQEAHSDT.

The 164-residue stretch at 1 to 164 (MGEMGKAMGL…ILEQEAHSDT (164 aa)) folds into the Reticulon domain. Transmembrane regions (helical) follow at residues 30–50 (SLFS…GLLF) and 117–137 (LISG…SMLC).

The protein resides in the endoplasmic reticulum membrane. In Arabidopsis thaliana (Mouse-ear cress), this protein is Reticulon-like protein B22 (RTNLB22).